The following is a 246-amino-acid chain: Exosome complex component Rrp41 (246 aa).

The protein belongs to the RNase PH family. Rrp41 subfamily. Component of the archaeal exosome complex. Forms a hexameric ring-like arrangement composed of 3 Rrp41-Rrp42 heterodimers. The hexameric ring associates with a trimer of Rrp4 and/or Csl4 subunits.

It localises to the cytoplasm. Catalytic component of the exosome, which is a complex involved in RNA degradation. Has 3'-&gt;5' exoribonuclease activity. Can also synthesize heteromeric RNA-tails. The protein is Exosome complex component Rrp41 of Pyrobaculum islandicum (strain DSM 4184 / JCM 9189 / GEO3).